The chain runs to 42 residues: Cytochrome b6-f complex subunit 7 (42 aa).

The helical transmembrane segment at 19 to 37 (AVVCFSMTLFGLSLGFGLL) threads the bilayer.

The protein belongs to the PetM family. In terms of assembly, the 4 large subunits of the cytochrome b6-f complex are cytochrome b6, subunit IV (17 kDa polypeptide, PetD), cytochrome f and the Rieske protein, while the 4 small subunits are PetG, PetL, PetM and PetN. The complex functions as a dimer.

The protein localises to the plastid. It is found in the chloroplast thylakoid membrane. Component of the cytochrome b6-f complex, which mediates electron transfer between photosystem II (PSII) and photosystem I (PSI), cyclic electron flow around PSI, and state transitions. The protein is Cytochrome b6-f complex subunit 7 of Phaeodactylum tricornutum (strain CCAP 1055/1).